Here is a 249-residue protein sequence, read N- to C-terminus: Segregation and condensation protein A (249 aa).

Belongs to the ScpA family. In terms of assembly, component of a cohesin-like complex composed of ScpA, ScpB and the Smc homodimer, in which ScpA and ScpB bind to the head domain of Smc. The presence of the three proteins is required for the association of the complex with DNA.

The protein localises to the cytoplasm. Participates in chromosomal partition during cell division. May act via the formation of a condensin-like complex containing Smc and ScpB that pull DNA away from mid-cell into both cell halves. This chain is Segregation and condensation protein A, found in Listeria monocytogenes serotype 4a (strain HCC23).